Here is a 192-residue protein sequence, read N- to C-terminus: dTDP-3-amino-3,6-dideoxy-alpha-D-galactopyranose 3-N-acetyltransferase (192 aa).

It belongs to the transferase hexapeptide repeat family.

The enzyme catalyses dTDP-3-amino-3,6-dideoxy-alpha-D-galactopyranose + acetyl-CoA = dTDP-3-acetamido-3,6-dideoxy-alpha-D-galactopyranose + CoA + H(+). Catalyzes the transfer of an acetyl group to dTDP-D-Fucp3N to form dTDP-D-Fucp3NAc in the biosynthesis of dTDP-3-acetamido-3,6-dideoxy-alpha-D-galactose, a glycan chain of the S-layer. This chain is dTDP-3-amino-3,6-dideoxy-alpha-D-galactopyranose 3-N-acetyltransferase (fdtC), found in Aneurinibacillus thermoaerophilus.